The following is a 499-amino-acid chain: Trichoplein keratin filament-binding protein (499 aa).

Residues 12–38 are a coiled coil; it reads SRVRTLEQQLVRQREQEARLRRQWEQH. Disordered stretches follow at residues 46-78 and 169-209; these read DVRSSKQAQWSSRQSFHRSMSAFQRDRMREEKQ and VQQQ…EEEN. Residues 50–67 are compositionally biased toward polar residues; sequence SKQAQWSSRQSFHRSMSA. 2 stretches are compositionally biased toward basic and acidic residues: residues 69–78 and 172–209; these read QRDRMREEKQ and QEKKQADERTQEEKQRFENEYERTRQEALERMRKEEEN. 3 coiled-coil regions span residues 71–133, 168–306, and 359–484; these read DRMR…ERRK, QVQQ…ALLE, and WEKR…MIRQ. Residues 74-499 are interaction with keratin proteins; that stretch reads REEKQRKLEE…IHSRPRSAWT (426 aa). Residues 260–426 are trichohyalin/plectin homology domain; it reads KMMEESRRKT…RLTLRLEKEQ (167 aa).

This sequence belongs to the TCHP family.

It is found in the cytoplasm. Its subcellular location is the cytoskeleton. The protein resides in the microtubule organizing center. It localises to the centrosome. May act as a 'capping' or 'branching' protein for keratin filaments in the cell periphery. May regulate K8/K18 filament and desmosome organization mainly at the apical or peripheral regions of simple epithelial cells. The protein is Trichoplein keratin filament-binding protein of Danio rerio (Zebrafish).